We begin with the raw amino-acid sequence, 408 residues long: Argininosuccinate synthase (408 aa).

Residues 11–19 (AYSGGLDTS) and Ala-38 contribute to the ATP site. The L-citrulline site is built by Tyr-91 and Ser-96. Gly-121 serves as a coordination point for ATP. L-aspartate is bound by residues Thr-123, Asn-127, and Asp-128. Asn-127 contributes to the L-citrulline binding site. Positions 131, 182, 191, 267, and 279 each coordinate L-citrulline.

It belongs to the argininosuccinate synthase family. Type 1 subfamily. As to quaternary structure, homotetramer.

Its subcellular location is the cytoplasm. The enzyme catalyses L-citrulline + L-aspartate + ATP = 2-(N(omega)-L-arginino)succinate + AMP + diphosphate + H(+). It functions in the pathway amino-acid biosynthesis; L-arginine biosynthesis; L-arginine from L-ornithine and carbamoyl phosphate: step 2/3. In Azorhizobium caulinodans (strain ATCC 43989 / DSM 5975 / JCM 20966 / LMG 6465 / NBRC 14845 / NCIMB 13405 / ORS 571), this protein is Argininosuccinate synthase.